The chain runs to 336 residues: tRNA N6-adenosine threonylcarbamoyltransferase (336 aa).

Fe cation-binding residues include His-114 and His-118. Substrate is bound by residues 136-140 (LVSGG), Asp-169, Gly-182, Asp-186, and Asn-275. Position 301 (Asp-301) interacts with Fe cation.

It belongs to the KAE1 / TsaD family. The cofactor is Fe(2+).

The protein localises to the cytoplasm. The catalysed reaction is L-threonylcarbamoyladenylate + adenosine(37) in tRNA = N(6)-L-threonylcarbamoyladenosine(37) in tRNA + AMP + H(+). Required for the formation of a threonylcarbamoyl group on adenosine at position 37 (t(6)A37) in tRNAs that read codons beginning with adenine. Is involved in the transfer of the threonylcarbamoyl moiety of threonylcarbamoyl-AMP (TC-AMP) to the N6 group of A37, together with TsaE and TsaB. TsaD likely plays a direct catalytic role in this reaction. The protein is tRNA N6-adenosine threonylcarbamoyltransferase of Streptococcus mutans serotype c (strain ATCC 700610 / UA159).